The primary structure comprises 77 residues: Oxyopinin-4a (77 aa).

An N-terminal signal peptide occupies residues 1 to 20 (MKISQVFIFVFLLMISVAWA). Positions 21 to 47 (NEAYEEESNYLSERFDADVEEITPEFR) are excised as a propeptide. An intrachain disulfide couples cysteine 51 to cysteine 57.

In terms of tissue distribution, expressed by the venom gland.

Its subcellular location is the secreted. It localises to the target cell membrane. Its function is as follows. Disrupts cell membranes through the formation of pores. Has antibacterial activity against Gram-positive bacteria S.aureus (MIC=10 uM) and B.subtilis (MIC=0.5 uM) as well as Gram-negative bacteria P.fluorescens (MIC=1 uM) and E.coli (MIC=0.5 uM). Has hemolytic activity against human erythrocytes (EC(50)=7 uM). The protein is Oxyopinin-4a of Oxyopes takobius (Lynx spider).